The primary structure comprises 54 residues: Ovomucoid (54 aa).

In terms of domain architecture, Kazal-like spans 4–54 (VDCSDYPKPVCSLEYMPLCGSDSKTYSNKCDFCNAFVDSNGTLSLSHFGKC). 3 cysteine pairs are disulfide-bonded: cysteine 6–cysteine 36, cysteine 14–cysteine 33, and cysteine 22–cysteine 54. Asparagine 43 carries an N-linked (GlcNAc...) asparagine glycan.

It localises to the secreted. In Circus aeruginosus (Western marsh harrier), this protein is Ovomucoid.